We begin with the raw amino-acid sequence, 464 residues long: tRNA modification GTPase MnmE (464 aa).

Residues arginine 27, glutamate 90, and lysine 129 each coordinate (6S)-5-formyl-5,6,7,8-tetrahydrofolate. A TrmE-type G domain is found at 222-384 (GITLVLAGSV…LYDKIRTLIS (163 aa)). Residues 232–237 (NAGKSS), 251–257 (SSYPGTT), and 276–279 (DTAG) contribute to the GTP site. 2 residues coordinate Mg(2+): serine 236 and threonine 257. Lysine 464 provides a ligand contact to (6S)-5-formyl-5,6,7,8-tetrahydrofolate.

Belongs to the TRAFAC class TrmE-Era-EngA-EngB-Septin-like GTPase superfamily. TrmE GTPase family. In terms of assembly, homodimer. Heterotetramer of two MnmE and two MnmG subunits. The cofactor is K(+).

It is found in the cytoplasm. Functionally, exhibits a very high intrinsic GTPase hydrolysis rate. Involved in the addition of a carboxymethylaminomethyl (cmnm) group at the wobble position (U34) of certain tRNAs, forming tRNA-cmnm(5)s(2)U34. This is tRNA modification GTPase MnmE from Borreliella afzelii (strain PKo) (Borrelia afzelii).